The primary structure comprises 504 residues: Maturase K (504 aa).

The protein belongs to the intron maturase 2 family. MatK subfamily.

The protein localises to the plastid. Its subcellular location is the chloroplast. Usually encoded in the trnK tRNA gene intron. Probably assists in splicing its own and other chloroplast group II introns. The protein is Maturase K of Vigna unguiculata (Cowpea).